A 361-amino-acid polypeptide reads, in one-letter code: MNDIERLEKEICLALEAASDEQTLETVRIAALGKKGCISEKLKALGKMDVEERHKVGPVLNGLKNRVLELWVQKRDLLRRQAMNKRLSRETVDVTLPVRSSPLERGRIHPISQVIEEIIAIYANMGFSLAEGPDIETDYYNFTALNFPEGHPAREMHDTFFFDVDKTGERKLLRTHTSPVQIRTMEKQKAPIRIIIPGKTYRMDSDATHSPMFHQVEGLVIDKTSTIAHMMWLHETFCKAFFEVPSVKMRFRPSFFPFTEPSMEVDIQCDRSGSKVKFGEGQDWLEILGCGMVHPYVLQNVGLDPDVYQGFAWGMGIDRIAMLKYGMPDLRAFFDADLRWLDHYGFRCFDMPAFFPGLRNE.

E260 contacts Mg(2+).

Belongs to the class-II aminoacyl-tRNA synthetase family. Phe-tRNA synthetase alpha subunit type 1 subfamily. Tetramer of two alpha and two beta subunits. Mg(2+) serves as cofactor.

The protein localises to the cytoplasm. The enzyme catalyses tRNA(Phe) + L-phenylalanine + ATP = L-phenylalanyl-tRNA(Phe) + AMP + diphosphate + H(+). This is Phenylalanine--tRNA ligase alpha subunit from Bartonella quintana (strain Toulouse) (Rochalimaea quintana).